Here is a 101-residue protein sequence, read N- to C-terminus: Protein Tat (101 aa).

Over residues 1-10 (MEPVDPRLEP) the composition is skewed to basic and acidic residues. Residues 1–20 (MEPVDPRLEPWNHPGSQPKT) are disordered. An interaction with human CREBBP region spans residues 1–24 (MEPVDPRLEPWNHPGSQPKTACNN). The segment at 1-48 (MEPVDPRLEPWNHPGSQPKTACNNCYCKRCCYHCLYCFTKKGLGISYG) is transactivation. The Zn(2+) site is built by Cys-22, Cys-25, and Cys-27. Positions 22–37 (CNNCYCKRCCYHCLYC) are cysteine-rich. Lys-28 carries the post-translational modification N6-acetyllysine; by host PCAF. Zn(2+) is bound by residues Cys-30, His-33, Cys-34, and Cys-37. Residues 38–48 (FTKKGLGISYG) form a core region. Basic residues predominate over residues 48–58 (GRKKRSQRRRT). A disordered region spans residues 48–101 (GRKKRSQRRRTPQSSKSHQDLIPEQPLSQQQGDQTGQKKQKEALESKTEADPCD). The Nuclear localization signal, RNA-binding (TAR), and protein transduction signature appears at 49 to 57 (RKKRSQRRR). Residues 49–86 (RKKRSQRRRTPQSSKSHQDLIPEQPLSQQQGDQTGQKK) form an interaction with the host capping enzyme RNGTT region. 2 positions are modified to N6-acetyllysine; by host EP300 and GCN5L2: Lys-50 and Lys-51. At Arg-52 the chain carries Asymmetric dimethylarginine; by host PRMT6. Over residues 86 to 101 (KQKEALESKTEADPCD) the composition is skewed to basic and acidic residues.

This sequence belongs to the lentiviruses Tat family. In terms of assembly, interacts with host CCNT1. Associates with the P-TEFb complex composed at least of Tat, P-TEFb (CDK9 and CCNT1), TAR RNA, RNA Pol II. Recruits the HATs CREBBP, TAF1/TFIID, EP300, PCAF and GCN5L2. Interacts with host KAT5/Tip60; this interaction targets the latter to degradation. Interacts with the host deacetylase SIRT1. Interacts with host capping enzyme RNGTT; this interaction stimulates RNGTT. Binds to host KDR, and to the host integrins ITGAV/ITGB3 and ITGA5/ITGB1. Interacts with host KPNB1/importin beta-1 without previous binding to KPNA1/importin alpha-1. Interacts with EIF2AK2. Interacts with host nucleosome assembly protein NAP1L1; this interaction may be required for the transport of Tat within the nucleus, since the two proteins interact at the nuclear rim. Interacts with host C1QBP/SF2P32; this interaction involves lysine-acetylated Tat. Interacts with the host chemokine receptors CCR2, CCR3 and CXCR4. Interacts with host DPP4/CD26; this interaction may trigger an anti-proliferative effect. Interacts with host LDLR. Interacts with the host extracellular matrix metalloproteinase MMP1. Interacts with host PRMT6; this interaction mediates Tat's methylation. Interacts with, and is ubiquitinated by MDM2/Hdm2. Interacts with host PSMC3 and HTATIP2. Interacts with STAB1; this interaction may overcome SATB1-mediated repression of IL2 and IL2RA (interleukin) in T cells by binding to the same domain than HDAC1. Interacts (when acetylated) with human CDK13, thereby increasing HIV-1 mRNA splicing and promoting the production of the doubly spliced HIV-1 protein Nef. Interacts with host TBP; this interaction modulates the activity of transcriptional pre-initiation complex. Interacts with host RELA. Interacts with host PLSCR1; this interaction negatively regulates Tat transactivation activity by altering its subcellular distribution. In terms of processing, asymmetrical arginine methylation by host PRMT6 seems to diminish the transactivation capacity of Tat and affects the interaction with host CCNT1. Acetylation by EP300, CREBBP, GCN5L2/GCN5 and PCAF regulates the transactivation activity of Tat. EP300-mediated acetylation of Lys-50 promotes dissociation of Tat from the TAR RNA through the competitive binding to PCAF's bromodomain. In addition, the non-acetylated Tat's N-terminus can also interact with PCAF. PCAF-mediated acetylation of Lys-28 enhances Tat's binding to CCNT1. Lys-50 is deacetylated by SIRT1. Post-translationally, polyubiquitination by host MDM2 does not target Tat to degradation, but activates its transactivation function and fosters interaction with CCNT1 and TAR RNA. In terms of processing, phosphorylated by EIF2AK2 on serine and threonine residues adjacent to the basic region important for TAR RNA binding and function. Phosphorylation of Tat by EIF2AK2 is dependent on the prior activation of EIF2AK2 by dsRNA.

The protein resides in the host nucleus. It localises to the host nucleolus. It is found in the host cytoplasm. Its subcellular location is the secreted. Its function is as follows. Transcriptional activator that increases RNA Pol II processivity, thereby increasing the level of full-length viral transcripts. Recognizes a hairpin structure at the 5'-LTR of the nascent viral mRNAs referred to as the transactivation responsive RNA element (TAR) and recruits the cyclin T1-CDK9 complex (P-TEFb complex) that will in turn hyperphosphorylate the RNA polymerase II to allow efficient elongation. The CDK9 component of P-TEFb and other Tat-activated kinases hyperphosphorylate the C-terminus of RNA Pol II that becomes stabilized and much more processive. Other factors such as HTATSF1/Tat-SF1, SUPT5H/SPT5, and HTATIP2 are also important for Tat's function. Besides its effect on RNA Pol II processivity, Tat induces chromatin remodeling of proviral genes by recruiting the histone acetyltransferases (HATs) CREBBP, EP300 and PCAF to the chromatin. This also contributes to the increase in proviral transcription rate, especially when the provirus integrates in transcriptionally silent region of the host genome. To ensure maximal activation of the LTR, Tat mediates nuclear translocation of NF-kappa-B by interacting with host RELA. Through its interaction with host TBP, Tat may also modulate transcription initiation. Tat can reactivate a latently infected cell by penetrating in it and transactivating its LTR promoter. In the cytoplasm, Tat is thought to act as a translational activator of HIV-1 mRNAs. In terms of biological role, extracellular circulating Tat can be endocytosed by surrounding uninfected cells via the binding to several surface receptors such as CD26, CXCR4, heparan sulfate proteoglycans (HSPG) or LDLR. Neurons are rarely infected, but they internalize Tat via their LDLR. Through its interaction with nuclear HATs, Tat is potentially able to control the acetylation-dependent cellular gene expression. Modulates the expression of many cellular genes involved in cell survival, proliferation or in coding for cytokines or cytokine receptors. Tat plays a role in T-cell and neurons apoptosis. Tat induced neurotoxicity and apoptosis probably contribute to neuroAIDS. Circulating Tat also acts as a chemokine-like and/or growth factor-like molecule that binds to specific receptors on the surface of the cells, affecting many cellular pathways. In the vascular system, Tat binds to ITGAV/ITGB3 and ITGA5/ITGB1 integrins dimers at the surface of endothelial cells and competes with bFGF for heparin-binding sites, leading to an excess of soluble bFGF. This Homo sapiens (Human) protein is Protein Tat.